We begin with the raw amino-acid sequence, 201 residues long: uncharacterized protein (201 aa).

The signal sequence occupies residues 1-23; the sequence is MKILYFIFVIIINILLILNHVKS. At 24 to 178 the chain is on the extracellular side; it reads KYNTFIFENT…GNYGEDPQRN (155 aa). Residues N114 and N134 are each glycosylated (N-linked (GlcNAc...) asparagine). The disordered stretch occupies residues 122–157; it reads TPETPSPTENAPNTSGGSSEGNHYTYKSSSSSSEHI. Residues 123–148 show a composition bias toward polar residues; it reads PETPSPTENAPNTSGGSSEGNHYTYK. Residues 179–199 traverse the membrane as a helical segment; sequence IGISLSSSLIFISILFLIIFI. Residues 200-201 lie on the Cytoplasmic side of the membrane; the sequence is NN.

It is found in the membrane. This is an uncharacterized protein from Dictyostelium discoideum (Social amoeba).